A 223-amino-acid chain; its full sequence is Neurotrophic factor BDNF precursor form (223 aa).

An N-terminal signal peptide occupies residues 1–5 (SCMKA). Positions 6–114 (APMKEVSIRG…AANMSMRVRR (109 aa)) are excised as a propeptide. Asn107 carries an N-linked (GlcNAc...) asparagine glycan. 2 cysteine pairs are disulfide-bonded: Cys127–Cys194 and Cys172–Cys223.

This sequence belongs to the NGF-beta family.

It is found in the secreted. Promotes the survival of neuronal populations that are all located either in the central nervous system or directly connected to it. The protein is Neurotrophic factor BDNF precursor form (BDNF) of Aspidites melanocephalus (Black-headed python).